Here is a 349-residue protein sequence, read N- to C-terminus: Dehydrogenase FPY6 (349 aa).

This sequence belongs to the Gfo/Idh/MocA family.

Its pathway is secondary metabolite biosynthesis. Functionally, dehydrogenase; part of the gene cluster that mediates the biosynthesis of the gamma-pyrones fusapyrone (FPY) and deoxyfusapyrone (dFPY). FPY is an undecaketide and thus likely synthesized by the polyketide synthase FPY1 from acetyl-CoA functioning as starter unit and the addition of 10 malonyl-CoA extender units by successive Claisen-condensations. Next to this, FPY shares some rare features: C-glycosylated 4-deoxyglucose at C-3, a gem-dimethyl group at C-13, and an alpha-beta to beta-gamma double bond shift at C-20. During FPY biosynthesis mono-C-methyl groups are transferred to the tetra-, penta-, hexa- and heptaketide, while two C-methyl groups are transferred to the nonaketide, suggesting that the CMet domain is programmed to selectively catalyze two successive C-alpha-methylation reactions of the nonaketide, while other alpha-carbons are non- or mono-methylated only. While the origin of the 4'-deoxyglucose moiety remains opaque, its transfer to C-3 is most likely mediated by the C-glycosyltransferase FPY2. Next to this, the hydroxyl group present at C-33 and discriminating between FPY and dFPY, is likely to be installed by the cytochrome P450 monooxygenase FPY7. No putative function can be predicted for the remaining genes FPY3-FPY6. In Fusarium mangiferae (Mango malformation disease fungus), this protein is Dehydrogenase FPY6.